The primary structure comprises 367 residues: MIIDTTEIETINSFSKLESLKEVYGIIWMLFPILTLVLGITIGVLVIVWLEREISAGIQQRIGPEYAGPLGILQALADGTKLLLKENLIPSTGDTRLFSIGPSIAVISIFLSYSVIPFGDHLVLADLSIGVFFWIAISSIAPVGLLMSGYGSNNKYSFLGGLRAAAQSISYEIPLALCVLSISLRVIRLSNSLSTVDIVEAQSKYGFWGWNLWRQPIGFIVFLISSLAECERLPFDLPEAEEELVAGYQTEYSGIKFGLFYIASYLNLLVSSLFVTVLYLGGWNLSIPYIFVPELFGINKRGKVFGTLIGIFITLAKTYLFLFIPIATRWTLPRLRMDQLLNLGWKFLLPISLGNLLLTTSSQLLSL.

Transmembrane regions (helical) follow at residues 30–50 (LFPILTLVLGITIGVLVIVWL), 98–118 (FSIGPSIAVISIFLSYSVIPF), 127–147 (LSIGVFFWIAISSIAPVGLLM), 164–184 (AAAQSISYEIPLALCVLSISL), 273–293 (LFVTVLYLGGWNLSIPYIFVP), 304–324 (VFGTLIGIFITLAKTYLFLFI), and 340–360 (LLNLGWKFLLPISLGNLLLTT).

Belongs to the complex I subunit 1 family. As to quaternary structure, NDH is composed of at least 16 different subunits, 5 of which are encoded in the nucleus.

It localises to the plastid. Its subcellular location is the chloroplast thylakoid membrane. The catalysed reaction is a plastoquinone + NADH + (n+1) H(+)(in) = a plastoquinol + NAD(+) + n H(+)(out). It carries out the reaction a plastoquinone + NADPH + (n+1) H(+)(in) = a plastoquinol + NADP(+) + n H(+)(out). Its function is as follows. NDH shuttles electrons from NAD(P)H:plastoquinone, via FMN and iron-sulfur (Fe-S) centers, to quinones in the photosynthetic chain and possibly in a chloroplast respiratory chain. The immediate electron acceptor for the enzyme in this species is believed to be plastoquinone. Couples the redox reaction to proton translocation, and thus conserves the redox energy in a proton gradient. The polypeptide is NAD(P)H-quinone oxidoreductase subunit 1, chloroplastic (Nicotiana tabacum (Common tobacco)).